The sequence spans 250 residues: Intermembrane phospholipid transport system lipoprotein MlaA (250 aa).

An N-terminal signal peptide occupies residues Met1–Gly18. The N-palmitoyl cysteine moiety is linked to residue Cys19. Cys19 carries S-diacylglycerol cysteine lipidation.

The protein belongs to the MlaA family.

Its subcellular location is the cell outer membrane. Involved in a phospholipid transport pathway that maintains lipid asymmetry in the outer membrane by retrograde trafficking of phospholipids from the outer membrane to the inner membrane. The protein is Intermembrane phospholipid transport system lipoprotein MlaA of Haemophilus influenzae (strain ATCC 51907 / DSM 11121 / KW20 / Rd).